The chain runs to 642 residues: Tigger transposable element-derived protein 5 (642 aa).

2 stretches are compositionally biased toward pro residues: residues 1–10 and 19–43; these read MYPAGPPAGP and LPGPPAPAPAPVPAARPPPPAPGPR. The disordered stretch occupies residues 1–45; that stretch reads MYPAGPPAGPVPRRGRRPLPGPPAPAPAPVPAARPPPPAPGPRPR. The 52-residue stretch at 47-98 folds into the HTH psq-type domain; sequence AVKMAFRKAYSIKDKLQAIERVKGGERQASVCRDFGVPGGTLRGWLKDEPKL. 2 consecutive DNA-binding regions (H-T-H motif) follow at residues 74–94 and 145–178; these read QASVCRDFGVPGGTLRGWLKD and PLIQAQAEAFARQIYGPECTFKASHGWFWRWQKR. The HTH CENPB-type domain maps to 112–185; the sequence is QRKKMRLANE…QKRHGISSQR (74 aa). A disordered region spans residues 185-233; sequence RFYGEAGPPAPSPAPGPPVKEEPALPSGAGPLPDRAPAPPPPAEGGYGD. 2 stretches are compositionally biased toward pro residues: residues 192–202 and 218–227; these read PPAPSPAPGPP and DRAPAPPPPA. 2 consecutive DDE-1 domains span residues 233–357 and 410–477; these read DEQI…VLLV and RAHI…ERCW. The tract at residues 535–587 is disordered; the sequence is LDDDGGPPEGCREEVGPALPPAAPPAPASLPSAMGGGEDEEEATDYGGTSVPT. A compositionally biased stretch (pro residues) spans 552–562; sequence ALPPAAPPAPA.

It belongs to the tigger transposable element derived protein family.

It localises to the nucleus. The sequence is that of Tigger transposable element-derived protein 5 (TIGD5) from Homo sapiens (Human).